The sequence spans 154 residues: Large ribosomal subunit protein uL15 (154 aa).

The disordered stretch occupies residues 1–44; that stretch reads MKLNELGNCKGATRNRKRVGRGIGSGTGKTSGRGVKGQKSRSGV. Gly residues predominate over residues 21–35; it reads RGIGSGTGKTSGRGV.

Belongs to the universal ribosomal protein uL15 family. In terms of assembly, part of the 50S ribosomal subunit.

In terms of biological role, binds to the 23S rRNA. The sequence is that of Large ribosomal subunit protein uL15 from Bartonella quintana (strain Toulouse) (Rochalimaea quintana).